Reading from the N-terminus, the 111-residue chain is Integration host factor subunit alpha (111 aa).

This sequence belongs to the bacterial histone-like protein family. As to quaternary structure, heterodimer of an alpha and a beta chain.

Functionally, this protein is one of the two subunits of integration host factor, a specific DNA-binding protein that functions in genetic recombination as well as in transcriptional and translational control. The chain is Integration host factor subunit alpha from Polaromonas sp. (strain JS666 / ATCC BAA-500).